The following is a 170-amino-acid chain: Adenine phosphoribosyltransferase (170 aa).

This sequence belongs to the purine/pyrimidine phosphoribosyltransferase family. In terms of assembly, homodimer.

It is found in the cytoplasm. The catalysed reaction is AMP + diphosphate = 5-phospho-alpha-D-ribose 1-diphosphate + adenine. It functions in the pathway purine metabolism; AMP biosynthesis via salvage pathway; AMP from adenine: step 1/1. Functionally, catalyzes a salvage reaction resulting in the formation of AMP, that is energically less costly than de novo synthesis. This Lactococcus lactis subsp. cremoris (strain MG1363) protein is Adenine phosphoribosyltransferase.